Consider the following 298-residue polypeptide: Nucleotide-binding protein MLBr00563 (298 aa).

ATP is bound at residue Gly-21–Gly-28. Asp-72 to Ser-75 contacts GTP.

This sequence belongs to the RapZ-like family.

Functionally, displays ATPase and GTPase activities. This is Nucleotide-binding protein MLBr00563 from Mycobacterium leprae (strain Br4923).